Consider the following 31-residue polypeptide: Cytochrome b6-f complex subunit 6 (31 aa).

A helical membrane pass occupies residues 4–24 (ITSYFGFLLAALTITSALLIG).

It belongs to the PetL family. In terms of assembly, the 4 large subunits of the cytochrome b6-f complex are cytochrome b6, subunit IV (17 kDa polypeptide, PetD), cytochrome f and the Rieske protein, while the 4 small subunits are PetG, PetL, PetM and PetN. The complex functions as a dimer.

The protein resides in the plastid. It localises to the chloroplast thylakoid membrane. Functionally, component of the cytochrome b6-f complex, which mediates electron transfer between photosystem II (PSII) and photosystem I (PSI), cyclic electron flow around PSI, and state transitions. PetL is important for photoautotrophic growth as well as for electron transfer efficiency and stability of the cytochrome b6-f complex. The chain is Cytochrome b6-f complex subunit 6 from Magnolia grandiflora (Southern magnolia).